Here is a 348-residue protein sequence, read N- to C-terminus: Rhodopsin (348 aa).

An N-acetylmethionine modification is found at methionine 1. At 1 to 36 the chain is on the extracellular side; sequence MNGTEGPNFYVPFSNKTGVVRSPFEYPQYYLAEPWQ. Residues asparagine 2 and asparagine 15 are each glycosylated (N-linked (GlcNAc...) asparagine). Residues 37-61 traverse the membrane as a helical segment; the sequence is FSMLAAYMFLLIVLGFPINFLTLYV. Residues 62–73 are Cytoplasmic-facing; it reads TVQHKKLRTPLN. The chain crosses the membrane as a helical span at residues 74 to 96; sequence YILLNLAVADLFMVFGGFTTTLY. At 97-110 the chain is on the extracellular side; the sequence is TSLHGYFVFGPTGC. Cysteine 110 and cysteine 187 are oxidised to a cystine. Residues 111-133 form a helical membrane-spanning segment; it reads NLEGFFATLGGEIALWSLVVLAI. A 'Ionic lock' involved in activated form stabilization motif is present at residues 134–136; the sequence is ERY. The Cytoplasmic segment spans residues 134–152; it reads ERYVVVCKPMSNFRFGENH. A helical transmembrane segment spans residues 153-173; the sequence is AIMGVGLTWVMALACAAPPLV. The Extracellular segment spans residues 174 to 202; the sequence is GWSRYIPEGMQCSCGIDYYTLKPEVNNES. Residue glutamate 201 participates in Zn(2+) binding. Residues 203-224 traverse the membrane as a helical segment; that stretch reads FVIYMFVVHFTIPMIVIFFCYG. The Cytoplasmic segment spans residues 225 to 252; it reads QLVFTVKEAAAQQQESATTQKAEKEVTR. The chain crosses the membrane as a helical span at residues 253–274; that stretch reads MVIIMVIAFLICWVPYASVAFY. Over 275–286 the chain is Extracellular; it reads IFTHQGFNFGPI. Residue glutamine 279 participates in Zn(2+) binding. A helical membrane pass occupies residues 287–308; sequence FMTLPAFFAKAAAIYNPVIYIM. Lysine 296 carries the post-translational modification N6-(retinylidene)lysine. Residues 309–348 are Cytoplasmic-facing; it reads MNKQFRTCMITTLCCGKNPLGDDEVSASASKTETSQVAPA. S-palmitoyl cysteine attachment occurs at residues cysteine 322 and cysteine 323. Residues 330-348 are interaction with SAG; that stretch reads DDEVSASASKTETSQVAPA. 2 positions are modified to phosphoserine: serine 334 and serine 338. Residues threonine 340 and threonine 342 each carry the phosphothreonine modification. Residue serine 343 is modified to Phosphoserine.

The protein belongs to the G-protein coupled receptor 1 family. Opsin subfamily. Homodimer. Interacts (phosphorylated form) with SAG. Interacts with GNAT1. Interacts with GNAT3. SAG and G-proteins compete for a common binding site. Interacts with GRK1. Interacts with PRCD; the interaction promotes PRCD stability. Forms a complex with ASAP1 and ARF4. Forms a complex with ASAP1, RAB11A, Rabin8/RAB3IP, ARF4 and RAB11FIP3; the complex regulates Golgi-to-cilia rhodopsin/RHO transport in photoreceptors. Phosphorylated on some or all of the serine and threonine residues present in the C-terminal region. In terms of processing, contains one covalently linked retinal chromophore. Upon light absorption, the covalently bound 11-cis-retinal is converted to all-trans-retinal. After hydrolysis of the Schiff base and release of the covalently bound all-trans-retinal, active rhodopsin is regenerated by binding of a fresh molecule of 11-cis-retinal.

Its subcellular location is the membrane. It is found in the cell projection. It localises to the cilium. The protein localises to the photoreceptor outer segment. Its function is as follows. Photoreceptor required for image-forming vision at low light intensity. Required for photoreceptor cell viability after birth. Light-induced isomerization of 11-cis to all-trans retinal triggers a conformational change that activates signaling via G-proteins. Subsequent receptor phosphorylation mediates displacement of the bound G-protein alpha subunit by the arrestin SAG and terminates signaling. The sequence is that of Rhodopsin (RHO) from Pagophilus groenlandicus (Harp seal).